Reading from the N-terminus, the 248-residue chain is tRNA pseudouridine synthase A (248 aa).

Aspartate 52 functions as the Nucleophile in the catalytic mechanism. Tyrosine 111 lines the substrate pocket.

The protein belongs to the tRNA pseudouridine synthase TruA family. In terms of assembly, homodimer.

It catalyses the reaction uridine(38/39/40) in tRNA = pseudouridine(38/39/40) in tRNA. In terms of biological role, formation of pseudouridine at positions 38, 39 and 40 in the anticodon stem and loop of transfer RNAs. The polypeptide is tRNA pseudouridine synthase A (Methylocella silvestris (strain DSM 15510 / CIP 108128 / LMG 27833 / NCIMB 13906 / BL2)).